A 933-amino-acid polypeptide reads, in one-letter code: MLQSKVFNKKTRGGRIQKQVREVYLRDDIYCGAFSCKSCDSSAARLSSSKIIVVDTNVVLHQIDLLENKAIDTVVVLSVVLDEVKNRNRSVYNRIRLLCSNPARQFYVFSNHVHKDTYVQAMEKESANDHNDRAIRVATLWYQKHLGDTSQVLLVTNDRENKRKATEEGISAETIEAYVKSLGQPELLDLLAQPTNEDITMEDADDSRPSKRKLIYQEHKPMSEITAGLHRGIYHQGKLRVNRFNPYEAYVGSESIGEEIIIYGRSNMNRAFDGDIVAVELLPRDQWQDEKALSIAEEDDEEDDTVHLAPDNVDDAPRTSNLSHETSGDKNAAPVRPSGRVVGVIRRNWHSYCGSLEPMSLPAGSGGTAHALFVSKDRRIPKIRINTRQLQNLLDMRIVVAVDSWDRQSRYPSGHYVRPIGKIGDKETETEVVLIENDVDYSPFSSQVLACLPPLPWSVSSEDVSNPVRQDLRHLLVFSVDPPGCKDIDDALHCTSLPNGNFELGVHIADVTNFVHPGTPLDDEASKRGTSVYLVERRIDMLPKPLTEDICSLRADVERLAFSVIWEMSPDAEIISTRFTKSIIKSSAALSYIEAQARMDDSRLTDSLTTDLRNMNTLAKIMRQRRIDRGALTLASAEVKFDIDPENHDPLNIGMYQILEANQMVEEFMLAANVSVAGQILKLFPSCSLLRRHPTPTREMLEPLLRTAAAIGLTLDVSSSKALADSLDRAVGEDPYFNKLIRILATRCMTQAVYFCSGDLSPPEYHHYGLAAPLYTHFTSPIRRYADVFVHRLLAASLGIYKLPTVFQDRPQLTSVADNLNYRHRNAQMAGRASVELYVLIYFRTRPTDEEARVVKIRSNGFIVFVPKYGIEGPVYLTGKGEKGAGDWYVDEEKQKIVKMDGSLSYSVLQTVKIHMEVVEPQPNRPKLQLTLL.

One can recognise a PINc domain in the interval K50 to R163. A CSD1 domain is found at Q217–N321. Residues A296–R336 are disordered. The CSD2 domain maps to A371 to D438. Positions R469–L798 constitute an RNB domain. D481 and D490 together coordinate Mg(2+).

Belongs to the RNR ribonuclease family. As to quaternary structure, probable component of the RNA exosome complex. Requires Mg(2+) as cofactor.

Its subcellular location is the nucleus. Its function is as follows. Catalytic component of the RNA exosome complex which has 3'-&gt;5' exoribonuclease activity and participates in a multitude of cellular RNA processing and degradation events. Required for 5.8S rRNA intermediate processing and the degradation of 5' external transcribed spacer (5' ETS), a maturation by-product of rRNA synthesis. Is not involved in the degradation of turnip crinkle virus (TCV) RNA and significant virus resistance. Required for normal development of female gametophytes and early embryogenesis. In Arabidopsis thaliana (Mouse-ear cress), this protein is Exosome complex exonuclease RRP44 homolog A.